The primary structure comprises 877 residues: MSSVPPVLSGSEIRSKFLEFFNQRQHPILPSASLVPEDPTVLLTIAGMLPFKPIFLGQQDAPSPRATTSQKCIRTNDIENVGRTARHHTFFEMLGNFSFGDYFKEQAIAWAWELSTEVFQLDPKNIVVSVFREDDEAFEIWRDKVGVNPKRIIRMGEEDNFWKSGPTGPCGPCSELYYDFKPELGDDNIDLEDDTRFIEYYNLVFMQYNRDAEGHLTPLQNKNIDTGMGLERMAQILQQVPNNYETDLIFPIIETAAKAAGIHYEKADEKTKVSLKVIGDHVRSVVHMIADGITASNTDRGYVLRRLIRRVVRHGRLIGIDGNFINQVAETAIQLSEAAYPNTRERESFIKQELEREENNFLKTLERGEKLLADIIAKEEKQISGVDAFTLFDTFGFPFELTQEIAEENGLTVDAEGYQAEMKKQQERSKAAHETIDLTVQGSLDELAEHIHPTAFLGYTDLQSQVKIEAVLVDGHRVETAEAGVVVQLICNQTPFYAESGGQIGDRGYFSGDQLVVRINDVQKESGFFVHHGKVERGSLTVGDTVNATIDRACRRRAQANHTATHLLQAALKNIVDDSISQAGSLVDFDRLRFDFNCPRALTAAELTQIEAQINTWIAEAHEGQVAVMPIAEAKAKGAVAMFGEKYGEEVRVVDFPGVSMELCGGTHVKNTAEIGLFKIISETGISSGIRRIEAVAGPAVLEYLKVRDQVVKDLGDKFKAKPEEITERVENIQAELRNTQKELEKVKAELAIAKSEALVSQAETVGEFQILVENMGDLDAKALQTAAERLQQKLGEAAVVLGSTPEDGKVSLVAAFSEGIYKGKKVQAGKFIGGIAKLCGGGGGGRPNLAQAGGRDASKLPEALHTAKQQLRETLG.

Positions 562, 566, 664, and 668 each coordinate Zn(2+).

Belongs to the class-II aminoacyl-tRNA synthetase family. Zn(2+) is required as a cofactor.

The protein localises to the cytoplasm. It catalyses the reaction tRNA(Ala) + L-alanine + ATP = L-alanyl-tRNA(Ala) + AMP + diphosphate. In terms of biological role, catalyzes the attachment of alanine to tRNA(Ala) in a two-step reaction: alanine is first activated by ATP to form Ala-AMP and then transferred to the acceptor end of tRNA(Ala). Also edits incorrectly charged Ser-tRNA(Ala) and Gly-tRNA(Ala) via its editing domain. The chain is Alanine--tRNA ligase from Picosynechococcus sp. (strain ATCC 27264 / PCC 7002 / PR-6) (Agmenellum quadruplicatum).